The chain runs to 351 residues: Holliday junction branch migration complex subunit RuvB (351 aa).

The tract at residues 1–182 is large ATPase domain (RuvB-L); it reads MNDRLITPDA…FGIVQRLEYY (182 aa). Residues I21, R22, G63, K66, T67, T68, 129-131, R172, Y182, and R219 each bind ATP; that span reads EDF. T67 lines the Mg(2+) pocket. Residues 183-253 form a small ATPAse domain (RuvB-S) region; that stretch reads NVADLSGIVK…VAHAAMELLN (71 aa). Residues 256–351 form a head domain (RuvB-H) region; it reads RNGFDEQDRR…QDAPPVGRER (96 aa). Residues R292, R311, and R316 each coordinate DNA. The interval 328–351 is disordered; sequence LNPPRQPDTSPDLFQDAPPVGRER.

Belongs to the RuvB family. Homohexamer. Forms an RuvA(8)-RuvB(12)-Holliday junction (HJ) complex. HJ DNA is sandwiched between 2 RuvA tetramers; dsDNA enters through RuvA and exits via RuvB. An RuvB hexamer assembles on each DNA strand where it exits the tetramer. Each RuvB hexamer is contacted by two RuvA subunits (via domain III) on 2 adjacent RuvB subunits; this complex drives branch migration. In the full resolvosome a probable DNA-RuvA(4)-RuvB(12)-RuvC(2) complex forms which resolves the HJ.

It is found in the cytoplasm. It catalyses the reaction ATP + H2O = ADP + phosphate + H(+). Functionally, the RuvA-RuvB-RuvC complex processes Holliday junction (HJ) DNA during genetic recombination and DNA repair, while the RuvA-RuvB complex plays an important role in the rescue of blocked DNA replication forks via replication fork reversal (RFR). RuvA specifically binds to HJ cruciform DNA, conferring on it an open structure. The RuvB hexamer acts as an ATP-dependent pump, pulling dsDNA into and through the RuvAB complex. RuvB forms 2 homohexamers on either side of HJ DNA bound by 1 or 2 RuvA tetramers; 4 subunits per hexamer contact DNA at a time. Coordinated motions by a converter formed by DNA-disengaged RuvB subunits stimulates ATP hydrolysis and nucleotide exchange. Immobilization of the converter enables RuvB to convert the ATP-contained energy into a lever motion, pulling 2 nucleotides of DNA out of the RuvA tetramer per ATP hydrolyzed, thus driving DNA branch migration. The RuvB motors rotate together with the DNA substrate, which together with the progressing nucleotide cycle form the mechanistic basis for DNA recombination by continuous HJ branch migration. Branch migration allows RuvC to scan DNA until it finds its consensus sequence, where it cleaves and resolves cruciform DNA. The polypeptide is Holliday junction branch migration complex subunit RuvB (Alkalilimnicola ehrlichii (strain ATCC BAA-1101 / DSM 17681 / MLHE-1)).